Reading from the N-terminus, the 356-residue chain is Histidinol-phosphate aminotransferase (356 aa).

Lys-214 carries the post-translational modification N6-(pyridoxal phosphate)lysine.

It belongs to the class-II pyridoxal-phosphate-dependent aminotransferase family. Histidinol-phosphate aminotransferase subfamily. As to quaternary structure, homodimer. The cofactor is pyridoxal 5'-phosphate.

It carries out the reaction L-histidinol phosphate + 2-oxoglutarate = 3-(imidazol-4-yl)-2-oxopropyl phosphate + L-glutamate. It participates in amino-acid biosynthesis; L-histidine biosynthesis; L-histidine from 5-phospho-alpha-D-ribose 1-diphosphate: step 7/9. The polypeptide is Histidinol-phosphate aminotransferase (Escherichia coli (strain SMS-3-5 / SECEC)).